Consider the following 204-residue polypeptide: Holliday junction branch migration complex subunit RuvA (204 aa).

The domain I stretch occupies residues 1–64 (MIGRLRGIIL…EDAQLLFGFN (64 aa)). The interval 65–143 (SKPERALFRE…GMHGDLFASD (79 aa)) is domain II. Residues 144-155 (APFALTSEMPKE) are flexible linker. The tract at residues 156–204 (TANDAEGEAVAALTALGYKPQEASRMIVKVGKPDADCETLIREALRAAI) is domain III.

This sequence belongs to the RuvA family. In terms of assembly, homotetramer. Forms an RuvA(8)-RuvB(12)-Holliday junction (HJ) complex. HJ DNA is sandwiched between 2 RuvA tetramers; dsDNA enters through RuvA and exits via RuvB. An RuvB hexamer assembles on each DNA strand where it exits the tetramer. Each RuvB hexamer is contacted by two RuvA subunits (via domain III) on 2 adjacent RuvB subunits; this complex drives branch migration. In the full resolvosome a probable DNA-RuvA(4)-RuvB(12)-RuvC(2) complex forms which resolves the HJ.

The protein resides in the cytoplasm. Functionally, the RuvA-RuvB-RuvC complex processes Holliday junction (HJ) DNA during genetic recombination and DNA repair, while the RuvA-RuvB complex plays an important role in the rescue of blocked DNA replication forks via replication fork reversal (RFR). RuvA specifically binds to HJ cruciform DNA, conferring on it an open structure. The RuvB hexamer acts as an ATP-dependent pump, pulling dsDNA into and through the RuvAB complex. HJ branch migration allows RuvC to scan DNA until it finds its consensus sequence, where it cleaves and resolves the cruciform DNA. This chain is Holliday junction branch migration complex subunit RuvA, found in Erwinia tasmaniensis (strain DSM 17950 / CFBP 7177 / CIP 109463 / NCPPB 4357 / Et1/99).